Reading from the N-terminus, the 691-residue chain is Elongation factor G (691 aa).

The 275-residue stretch at 8 to 282 (ERVRNIGIAA…AVVDYLPAPI (275 aa)) folds into the tr-type G domain. GTP-binding positions include 17–24 (AHIDAGKT), 81–85 (DTPGH), and 135–138 (NKMD).

It belongs to the TRAFAC class translation factor GTPase superfamily. Classic translation factor GTPase family. EF-G/EF-2 subfamily.

Its subcellular location is the cytoplasm. Catalyzes the GTP-dependent ribosomal translocation step during translation elongation. During this step, the ribosome changes from the pre-translocational (PRE) to the post-translocational (POST) state as the newly formed A-site-bound peptidyl-tRNA and P-site-bound deacylated tRNA move to the P and E sites, respectively. Catalyzes the coordinated movement of the two tRNA molecules, the mRNA and conformational changes in the ribosome. The polypeptide is Elongation factor G (Synechococcus sp. (strain CC9311)).